Consider the following 511-residue polypeptide: Lariat debranching enzyme (511 aa).

The a divalent metal cation site is built by Cys52, His54, Asp83, and Asn128. The tract at residues Ser168–Arg198 is lariat recognition loop. His226, His278, and His280 together coordinate a divalent metal cation. The disordered stretch occupies residues Glu473–Leu511. Residues Ile477–Lys498 show a composition bias toward basic and acidic residues.

This sequence belongs to the lariat debranching enzyme family. Requires Fe(2+) as cofactor. It depends on Zn(2+) as a cofactor. Mn(2+) serves as cofactor.

It is found in the nucleus. With respect to regulation, active in presence of diverse metals including Fe(2+), Zn(2+), Mn(2+). Binds two metal cations in two adjacent alpha and beta metal-binding pockets. Its function is as follows. Cleaves the 2'-5' phosphodiester linkage at the branch point of lariat intron pre-mRNAs after splicing and converts them into linear molecules that are subsequently degraded. It thereby facilitates ribonucleotide turnover. This is Lariat debranching enzyme (dbr-1) from Caenorhabditis briggsae.